We begin with the raw amino-acid sequence, 1048 residues long: Anguibactin system regulator (1048 aa).

The region spanning proline 965–arginine 1039 is the Carrier domain.

Belongs to the ATP-dependent AMP-binding enzyme family.

It participates in siderophore biosynthesis; anguibactin biosynthesis. Its function is as follows. Bifunctional protein that plays an essential role in virulence. Plays a role in both the production of the siderophore anguibactin and the regulation of iron transport genes. This chain is Anguibactin system regulator (angR), found in Vibrio anguillarum (Listonella anguillarum).